The sequence spans 1277 residues: Myosin-1 (1277 aa).

Over residues 1 to 13 the composition is skewed to basic residues; it reads MAPSKKAGKKVTP. The interval 1 to 27 is disordered; the sequence is MAPSKKAGKKVTPKKAAGNNAKSKVAK. Residues 39–718 enclose the Myosin motor domain; it reads VGVTDMTLLT…TLFALETMRD (680 aa). ATP is bound at residue 132 to 139; it reads GESGAGKT. Serine 360 is modified (phosphoserine). The tract at residues 407-489 is actin-binding; it reads IIGILDIFGF…PGIFAALNDA (83 aa). The disordered stretch occupies residues 567 to 587; the sequence is LFPDRPDPNSKKRPPTASDRI. 2 IQ domains span residues 722-742 and 743-768; these read HNMAARIQRAFRNYMRYKHEC and ARRIQRFWKNNKEALVYAQVRDYGHQ. A TH1 domain is found at 776 to 965; sequence RRRFSLLSYR…TVHVPSGEPA (190 aa). 2 disordered regions span residues 952–1072 and 1129–1259; these read YKSH…AEPE and PKAA…GPGQ. The span at 1015 to 1056 shows a compositional bias: low complexity; it reads PAVATPSVVSTPAAAAVVSKPKPAASTPAAVRAPAVTPAARS. Pro residues predominate over residues 1057 to 1068; the sequence is VPPPPPPPPPAR. The 59-residue stretch at 1071–1129 folds into the SH3 domain; sequence PEKEMYRAKFDFQGQEGEMSLTKDDEVELIEKDENGWWLVKKDGVEAWAPYNYLERIAP. A compositionally biased stretch (pro residues) spans 1132 to 1142; the sequence is APAPPPPPARP. Polar residues-rich tracts occupy residues 1145–1159 and 1185–1197; these read TSTVPKPPLSSTTAD and AATTDSTPNSSRP. Over residues 1204 to 1224 the composition is skewed to pro residues; sequence VPPPVAAKPKPPVVAPKPGVP. Over residues 1226-1240 the composition is skewed to low complexity; the sequence is PGGKPALPTTARPAP. The segment covering 1241-1258 has biased composition (gly residues); that stretch reads SGGGAAAGRLGGGGGGPG.

Belongs to the TRAFAC class myosin-kinesin ATPase superfamily. Myosin family. Post-translationally, phosphorylation of the TEDS site (Ser-360) is required for the polarization of the actin cytoskeleton. Phosphorylation probably activates the myosin-I ATPase activity.

Its subcellular location is the cytoplasm. The protein resides in the cytoskeleton. The protein localises to the actin patch. Functionally, type-I myosin implicated in the organization of the actin cytoskeleton. Required for proper actin cytoskeleton polarization. At the cell cortex, assembles in patch-like structures together with proteins from the actin-polymerizing machinery and promotes actin assembly. Functions as actin nucleation-promoting factor (NPF) for the Arp2/3 complex. The chain is Myosin-1 (MYO1) from Coprinopsis cinerea (strain Okayama-7 / 130 / ATCC MYA-4618 / FGSC 9003) (Inky cap fungus).